The following is a 547-amino-acid chain: Kelch repeat and BTB domain-containing protein 2 (547 aa).

The BTB domain occupies Cys20–Asn89. Kelch repeat units follow at residues Asp295–Asp342, Thr343–Gln389, and Ile391–Asp454.

As to quaternary structure, interacts (via BTB domain) with host CUL3.

It localises to the host cytoplasm. Functionally, probable substrate-specific adapter of CUL3-containing E3 ubiquitin-protein ligases which mediate the ubiquitination and subsequent proteasomal degradation of host target proteins. The protein is Kelch repeat and BTB domain-containing protein 2 (KBTB2) of Bos taurus (Bovine).